A 231-amino-acid polypeptide reads, in one-letter code: Small ribosomal subunit protein uS3 (231 aa).

A KH type-2 domain is found at 17–86; that stretch reads VEQYLNKELK…SPQVEVQQVA (70 aa).

The protein belongs to the universal ribosomal protein uS3 family. Part of the 30S ribosomal subunit.

In terms of biological role, binds the lower part of the 30S subunit head. This Methanocorpusculum labreanum (strain ATCC 43576 / DSM 4855 / Z) protein is Small ribosomal subunit protein uS3.